The following is a 323-amino-acid chain: tRNA U34 carboxymethyltransferase (323 aa).

Carboxy-S-adenosyl-L-methionine-binding positions include lysine 91, tryptophan 105, lysine 110, glycine 130, 180–181 (IE), methionine 196, tyrosine 200, and arginine 315.

Belongs to the class I-like SAM-binding methyltransferase superfamily. CmoB family. As to quaternary structure, homotetramer.

It catalyses the reaction carboxy-S-adenosyl-L-methionine + 5-hydroxyuridine(34) in tRNA = 5-carboxymethoxyuridine(34) in tRNA + S-adenosyl-L-homocysteine + H(+). Functionally, catalyzes carboxymethyl transfer from carboxy-S-adenosyl-L-methionine (Cx-SAM) to 5-hydroxyuridine (ho5U) to form 5-carboxymethoxyuridine (cmo5U) at position 34 in tRNAs. This Citrifermentans bemidjiense (strain ATCC BAA-1014 / DSM 16622 / JCM 12645 / Bem) (Geobacter bemidjiensis) protein is tRNA U34 carboxymethyltransferase.